We begin with the raw amino-acid sequence, 455 residues long: Bifunctional protein GlmU (455 aa).

Residues 1 to 228 are pyrophosphorylase; the sequence is MYKCALVLAA…FEETIGVNSR (228 aa). UDP-N-acetyl-alpha-D-glucosamine-binding positions include 8 to 11, lysine 22, glutamine 73, and 78 to 79; these read LAAG and GT. Residue aspartate 103 participates in Mg(2+) binding. 4 residues coordinate UDP-N-acetyl-alpha-D-glucosamine: glycine 140, glutamate 154, asparagine 169, and asparagine 226. Mg(2+) is bound at residue asparagine 226. A linker region spans residues 229-249; it reads AQLAQAEEILKDRINLKHMEN. The interval 250–455 is N-acetyltransferase; the sequence is GVTLIDPKTT…GWVDKKGLKK (206 aa). UDP-N-acetyl-alpha-D-glucosamine contacts are provided by arginine 331 and lysine 349. Residue histidine 361 is the Proton acceptor of the active site. Positions 364 and 375 each coordinate UDP-N-acetyl-alpha-D-glucosamine. Acetyl-CoA-binding positions include 384 to 385, alanine 421, and arginine 438; that span reads NY.

This sequence in the N-terminal section; belongs to the N-acetylglucosamine-1-phosphate uridyltransferase family. It in the C-terminal section; belongs to the transferase hexapeptide repeat family. In terms of assembly, homotrimer. It depends on Mg(2+) as a cofactor.

Its subcellular location is the cytoplasm. The enzyme catalyses alpha-D-glucosamine 1-phosphate + acetyl-CoA = N-acetyl-alpha-D-glucosamine 1-phosphate + CoA + H(+). It catalyses the reaction N-acetyl-alpha-D-glucosamine 1-phosphate + UTP + H(+) = UDP-N-acetyl-alpha-D-glucosamine + diphosphate. It functions in the pathway nucleotide-sugar biosynthesis; UDP-N-acetyl-alpha-D-glucosamine biosynthesis; N-acetyl-alpha-D-glucosamine 1-phosphate from alpha-D-glucosamine 6-phosphate (route II): step 2/2. The protein operates within nucleotide-sugar biosynthesis; UDP-N-acetyl-alpha-D-glucosamine biosynthesis; UDP-N-acetyl-alpha-D-glucosamine from N-acetyl-alpha-D-glucosamine 1-phosphate: step 1/1. Its pathway is bacterial outer membrane biogenesis; LPS lipid A biosynthesis. In terms of biological role, catalyzes the last two sequential reactions in the de novo biosynthetic pathway for UDP-N-acetylglucosamine (UDP-GlcNAc). The C-terminal domain catalyzes the transfer of acetyl group from acetyl coenzyme A to glucosamine-1-phosphate (GlcN-1-P) to produce N-acetylglucosamine-1-phosphate (GlcNAc-1-P), which is converted into UDP-GlcNAc by the transfer of uridine 5-monophosphate (from uridine 5-triphosphate), a reaction catalyzed by the N-terminal domain. The polypeptide is Bifunctional protein GlmU (Clostridium botulinum (strain Eklund 17B / Type B)).